Consider the following 1172-residue polypeptide: Serine/threonine-protein kinase Nek10 (1172 aa).

An ARM repeat occupies 209-251 (GAHKTLVNLLGARDTNVLLGSLLALASLAESQECREKISELNI). Positions 481–514 (YEELVSKLNLLVEDELKQIAENIESINQNKAPLK) form a coiled coil. The region spanning 519–712 (YAILDHLGSG…SEPYGEKADV (194 aa)) is the Protein kinase domain. ATP is bound by residues 525–533 (LGSGAFGCV) and K548. Residue D655 is the Proton acceptor of the active site. Disordered regions lie at residues 855–875 (SELS…YGKD) and 898–954 (TYSE…GSRP). Positions 919 to 945 (PLKESTFNILKRSFSASGGERQSQTRD) are enriched in polar residues.

It belongs to the protein kinase superfamily. NEK Ser/Thr protein kinase family. NIMA subfamily. As to quaternary structure, interacts with RAF1 and MAP2K1; the interaction is direct with RAF1 and required for ERK1/2-signaling pathway activation in response to UV irradiation. Requires Mg(2+) as cofactor. In terms of tissue distribution, expressed in the lung.

The enzyme catalyses L-seryl-[protein] + ATP = O-phospho-L-seryl-[protein] + ADP + H(+). It catalyses the reaction L-threonyl-[protein] + ATP = O-phospho-L-threonyl-[protein] + ADP + H(+). In terms of biological role, plays a role in the cellular response to UV irradiation. Mediates G2/M cell cycle arrest, MEK autoactivation and ERK1/2-signaling pathway activation in response to UV irradiation. In ciliated cells of airways, it is involved in the regulation of mucociliary transport. The polypeptide is Serine/threonine-protein kinase Nek10 (Homo sapiens (Human)).